The sequence spans 96 residues: Seed trypsin/chymotrypsin inhibitor IVA (96 aa).

The N-terminal stretch at 1–10 (LSFAANVVNA) is a signal peptide. A propeptide spanning residues 11–24 (RFDSTSFITQVLSN) is cleaved from the precursor. Disulfide bonds link Cys32–Cys85, Cys33–Cys48, Cys36–Cys81, Cys38–Cys46, Cys55–Cys62, Cys59–Cys74, and Cys64–Cys72. Residues 88 to 96 (SEVEEVIKN) constitute a propeptide, removed in PSTI I.

The protein belongs to the Bowman-Birk serine protease inhibitor family. As to expression, seed.

In terms of biological role, inhibitor of trypsin and of chymotrypsin. May function as a natural phytochemical defense against predators. The sequence is that of Seed trypsin/chymotrypsin inhibitor IVA (TI1236) from Pisum sativum (Garden pea).